We begin with the raw amino-acid sequence, 35 residues long: MSDIN-like toxin proprotein 8 (35 aa).

A propeptide spanning residues 1 to 10 is cleaved from the precursor; it reads MSDINATRLP. A cross-link (cyclopeptide (Phe-Pro)) is located at residues 11–18; that stretch reads FVFVASPP. Positions 19–35 are excised as a propeptide; that stretch reads CVGDDIAMVLTRGENLC.

This sequence belongs to the MSDIN fungal toxin family. Processed by the macrocyclase-peptidase enzyme POPB to yield a toxic cyclic octapeptide. POPB first removes 10 residues from the N-terminus. Conformational trapping of the remaining peptide forces the enzyme to release this intermediate rather than proceed to macrocyclization. The enzyme rebinds the remaining peptide in a different conformation and catalyzes macrocyclization of the N-terminal 8 residues. Expressed in basidiocarps.

Functionally, probable toxin that belongs to the MSDIN-like toxin family responsible for a large number of food poisoning cases and deaths. In Amanita exitialis (Guangzhou destroying angel), this protein is MSDIN-like toxin proprotein 8.